The chain runs to 408 residues: S-adenosylmethionine synthase (408 aa).

142–147 (GEGSGD) serves as a coordination point for ATP.

It belongs to the AdoMet synthase 2 family. Mg(2+) is required as a cofactor.

It catalyses the reaction L-methionine + ATP + H2O = S-adenosyl-L-methionine + phosphate + diphosphate. It participates in amino-acid biosynthesis; S-adenosyl-L-methionine biosynthesis; S-adenosyl-L-methionine from L-methionine: step 1/1. Catalyzes the formation of S-adenosylmethionine from methionine and ATP. The chain is S-adenosylmethionine synthase from Halobacterium salinarum (strain ATCC 29341 / DSM 671 / R1).